Reading from the N-terminus, the 286-residue chain is Fructose-bisphosphate aldolase (286 aa).

Serine 50 serves as a coordination point for D-glyceraldehyde 3-phosphate. Aspartate 85 (proton donor) is an active-site residue. Histidine 86, aspartate 107, glutamate 137, and histidine 181 together coordinate Zn(2+). Glycine 182 provides a ligand contact to dihydroxyacetone phosphate. Zn(2+) is bound at residue histidine 209. Dihydroxyacetone phosphate contacts are provided by residues 210–212 (GGT) and 231–234 (NVNT).

The protein belongs to the class II fructose-bisphosphate aldolase family. It depends on Zn(2+) as a cofactor.

It carries out the reaction beta-D-fructose 1,6-bisphosphate = D-glyceraldehyde 3-phosphate + dihydroxyacetone phosphate. The protein operates within carbohydrate degradation; glycolysis; D-glyceraldehyde 3-phosphate and glycerone phosphate from D-glucose: step 4/4. Its function is as follows. Catalyzes the aldol condensation of dihydroxyacetone phosphate (DHAP or glycerone-phosphate) with glyceraldehyde 3-phosphate (G3P) to form fructose 1,6-bisphosphate (FBP) in gluconeogenesis and the reverse reaction in glycolysis. In Staphylococcus aureus (strain MSSA476), this protein is Fructose-bisphosphate aldolase (fba).